The primary structure comprises 360 residues: Glycerol-1-phosphate dehydrogenase [NAD(P)+] (360 aa).

NAD(+)-binding positions include glycine 108–aspartate 112 and threonine 130–serine 133. Aspartate 135 is a binding site for substrate. Position 139 (serine 139) interacts with NAD(+). Aspartate 182 serves as a coordination point for substrate. Residues aspartate 182 and histidine 262 each coordinate Zn(2+). Histidine 266 provides a ligand contact to substrate. Histidine 278 serves as a coordination point for Zn(2+).

Belongs to the glycerol-1-phosphate dehydrogenase family. Zn(2+) serves as cofactor.

The protein resides in the cytoplasm. It carries out the reaction sn-glycerol 1-phosphate + NAD(+) = dihydroxyacetone phosphate + NADH + H(+). It catalyses the reaction sn-glycerol 1-phosphate + NADP(+) = dihydroxyacetone phosphate + NADPH + H(+). It participates in membrane lipid metabolism; glycerophospholipid metabolism. Catalyzes the NAD(P)H-dependent reduction of dihydroxyacetonephosphate (DHAP or glycerone phosphate) to glycerol 1-phosphate (G1P). The G1P thus generated is used as the glycerophosphate backbone of phospholipids in the cellular membranes of Archaea. The protein is Glycerol-1-phosphate dehydrogenase [NAD(P)+] of Methanoculleus marisnigri (strain ATCC 35101 / DSM 1498 / JR1).